The primary structure comprises 512 residues: Putative ribose/galactose/methyl galactoside import ATP-binding protein 1 (512 aa).

ABC transporter domains are found at residues 14–251 (IALT…VGRQ) and 262–507 (TSAN…TQRE). Residue 46 to 53 (GENGAGKS) participates in ATP binding.

It belongs to the ABC transporter superfamily. Carbohydrate importer 2 (CUT2) (TC 3.A.1.2) family.

Its subcellular location is the cell inner membrane. It carries out the reaction D-ribose(out) + ATP + H2O = D-ribose(in) + ADP + phosphate + H(+). The enzyme catalyses D-galactose(out) + ATP + H2O = D-galactose(in) + ADP + phosphate + H(+). Part of an ABC transporter complex involved in carbohydrate import. Could be involved in ribose, galactose and/or methyl galactoside import. Responsible for energy coupling to the transport system. The polypeptide is Putative ribose/galactose/methyl galactoside import ATP-binding protein 1 (Burkholderia lata (strain ATCC 17760 / DSM 23089 / LMG 22485 / NCIMB 9086 / R18194 / 383)).